We begin with the raw amino-acid sequence, 726 residues long: Fatty acid oxidation complex subunit alpha (726 aa).

An enoyl-CoA hydratase/isomerase region spans residues 1 to 189 (MIYQGENLSV…KIGMVDGIVS (189 aa)). Asp-296 contributes to the substrate binding site. The 3-hydroxyacyl-CoA dehydrogenase stretch occupies residues 311–726 (EPVKNAAVLG…PKSSVSSPSV (416 aa)). Residues Met-324, Asp-343, 400-402 (VVE), Lys-407, and Ser-429 contribute to the NAD(+) site. His-450 acts as the For 3-hydroxyacyl-CoA dehydrogenase activity in catalysis. Asn-453 lines the NAD(+) pocket. Substrate is bound by residues Asn-500 and Tyr-660.

In the N-terminal section; belongs to the enoyl-CoA hydratase/isomerase family. It in the C-terminal section; belongs to the 3-hydroxyacyl-CoA dehydrogenase family. In terms of assembly, heterotetramer of two alpha chains (FadB) and two beta chains (FadA).

The enzyme catalyses a (3S)-3-hydroxyacyl-CoA + NAD(+) = a 3-oxoacyl-CoA + NADH + H(+). The catalysed reaction is a (3S)-3-hydroxyacyl-CoA = a (2E)-enoyl-CoA + H2O. It catalyses the reaction a 4-saturated-(3S)-3-hydroxyacyl-CoA = a (3E)-enoyl-CoA + H2O. It carries out the reaction (3S)-3-hydroxybutanoyl-CoA = (3R)-3-hydroxybutanoyl-CoA. The enzyme catalyses a (3Z)-enoyl-CoA = a 4-saturated (2E)-enoyl-CoA. The catalysed reaction is a (3E)-enoyl-CoA = a 4-saturated (2E)-enoyl-CoA. It functions in the pathway lipid metabolism; fatty acid beta-oxidation. Its function is as follows. Involved in the aerobic and anaerobic degradation of long-chain fatty acids via beta-oxidation cycle. Catalyzes the formation of 3-oxoacyl-CoA from enoyl-CoA via L-3-hydroxyacyl-CoA. It can also use D-3-hydroxyacyl-CoA and cis-3-enoyl-CoA as substrate. This is Fatty acid oxidation complex subunit alpha from Aliivibrio salmonicida (strain LFI1238) (Vibrio salmonicida (strain LFI1238)).